A 496-amino-acid polypeptide reads, in one-letter code: Guanosine-5'-triphosphate,3'-diphosphate pyrophosphatase (496 aa).

Belongs to the GppA/Ppx family. GppA subfamily.

It carries out the reaction guanosine 3'-diphosphate 5'-triphosphate + H2O = guanosine 3',5'-bis(diphosphate) + phosphate + H(+). The protein operates within purine metabolism; ppGpp biosynthesis; ppGpp from GTP: step 2/2. Its function is as follows. Catalyzes the conversion of pppGpp to ppGpp. Guanosine pentaphosphate (pppGpp) is a cytoplasmic signaling molecule which together with ppGpp controls the 'stringent response', an adaptive process that allows bacteria to respond to amino acid starvation, resulting in the coordinated regulation of numerous cellular activities. The sequence is that of Guanosine-5'-triphosphate,3'-diphosphate pyrophosphatase from Aeromonas salmonicida (strain A449).